A 163-amino-acid chain; its full sequence is Type VII secretion system protein EsaG (163 aa).

As to quaternary structure, interacts with EssD (via C-terminus). Interacts with EssE.

The protein resides in the cytoplasm. Functionally, component of the type VII secretion system (Ess). Also acts as part of toxin-antitoxin system. Counteracts the toxic effect of EssD via direct interaction. This Staphylococcus aureus (strain NCTC 8325 / PS 47) protein is Type VII secretion system protein EsaG.